We begin with the raw amino-acid sequence, 648 residues long: p-hydroxybenzoic acid efflux pump subunit AaeB (648 aa).

Helical transmembrane passes span F11–L31, A41–I61, G65–I87, L91–L110, T125–L145, E150–V170, L369–V389, F406–P426, Q430–V450, M458–I478, and F481–V501.

Belongs to the aromatic acid exporter ArAE (TC 2.A.85) family.

It is found in the cell inner membrane. Functionally, forms an efflux pump with AaeA. Could function as a metabolic relief valve, allowing to eliminate certain compounds when they accumulate to high levels in the cell. The polypeptide is p-hydroxybenzoic acid efflux pump subunit AaeB (Edwardsiella ictaluri (strain 93-146)).